Reading from the N-terminus, the 517-residue chain is 2-isopropylmalate synthase (517 aa).

Positions 4–266 constitute a Pyruvate carboxyltransferase domain; the sequence is INFFDTTLRD…ESTIQLNEIK (263 aa). Positions 13, 201, 203, and 237 each coordinate Mn(2+). The regulatory domain stretch occupies residues 391-517; that stretch reads EFESLQVHYG…IEIEKHHAIS (127 aa).

It belongs to the alpha-IPM synthase/homocitrate synthase family. LeuA type 1 subfamily. As to quaternary structure, homodimer. Mn(2+) is required as a cofactor.

The protein resides in the cytoplasm. It catalyses the reaction 3-methyl-2-oxobutanoate + acetyl-CoA + H2O = (2S)-2-isopropylmalate + CoA + H(+). The protein operates within amino-acid biosynthesis; L-leucine biosynthesis; L-leucine from 3-methyl-2-oxobutanoate: step 1/4. Catalyzes the condensation of the acetyl group of acetyl-CoA with 3-methyl-2-oxobutanoate (2-ketoisovalerate) to form 3-carboxy-3-hydroxy-4-methylpentanoate (2-isopropylmalate). In Bacillus pumilus (strain SAFR-032), this protein is 2-isopropylmalate synthase.